Reading from the N-terminus, the 220-residue chain is Putative phosphatase YhcW (220 aa).

Residue Asp-8 is the Nucleophile of the active site. Residues Asp-8, Asp-10, and Asp-166 each contribute to the a divalent metal cation site. The active-site Proton donor is Asp-10.

It belongs to the HAD-like hydrolase superfamily. CbbY/CbbZ/Gph/YieH family. Requires a divalent metal cation as cofactor.

In Bacillus subtilis (strain 168), this protein is Putative phosphatase YhcW (yhcW).